The chain runs to 344 residues: MILKRVTEALEAYKNGEMLIVMDDEDRENEGDLVLAGIFSTPEKINFMATHARGLICVSLTKDLAKKFELPPMVSVNDSNHETAFTVSIDAKEARTGISAFERHLTIELLCKDTTKPSDFVRPGHIFPLIAKDGGVLARTGHTEASVDLCKLAGLKPVSVICEIMKEDGSMARRGDKFLSDFALKHNLKTLYVSDLISYRLENESLLKMFCQEEREFLKHQTQCYTFLDHQQKNHYAFKFKGAKTHDLAPLVRFHPIKEDFDFLTTDAFEVFFKALEYLKHEGGYLIFMNTHSKENNVVKDFGIGALVLKNLGIKDFRLLSSCEDRQYKALSGFGLKLVETISL.

Residues 1–202 (MILKRVTEAL…VSDLISYRLE (202 aa)) form a DHBP synthase region. D-ribulose 5-phosphate-binding positions include 27–28 (RE), Asp-32, 139–143 (RTGHT), and Glu-163. Mg(2+) is bound at residue Glu-28. Residue His-142 participates in Mg(2+) binding. A GTP cyclohydrolase II-like region spans residues 203-344 (NESLLKMFCQ…GLKLVETISL (142 aa)).

In the N-terminal section; belongs to the DHBP synthase family. The protein in the C-terminal section; belongs to the GTP cyclohydrolase II family. Requires Mg(2+) as cofactor. Mn(2+) serves as cofactor.

It catalyses the reaction D-ribulose 5-phosphate = (2S)-2-hydroxy-3-oxobutyl phosphate + formate + H(+). It functions in the pathway cofactor biosynthesis; riboflavin biosynthesis; 2-hydroxy-3-oxobutyl phosphate from D-ribulose 5-phosphate: step 1/1. Catalyzes the conversion of D-ribulose 5-phosphate to formate and 3,4-dihydroxy-2-butanone 4-phosphate. The polypeptide is 3,4-dihydroxy-2-butanone 4-phosphate synthase (ribB) (Helicobacter pylori (strain ATCC 700392 / 26695) (Campylobacter pylori)).